Consider the following 73-residue polypeptide: Cell division protein ZapB (73 aa).

Residues 3–67 (LELLSKLETK…WNDKVTGLVG (65 aa)) adopt a coiled-coil conformation.

The protein belongs to the ZapB family. In terms of assembly, homodimer. The ends of the coiled-coil dimer bind to each other, forming polymers. Interacts with FtsZ.

Its subcellular location is the cytoplasm. Functionally, non-essential, abundant cell division factor that is required for proper Z-ring formation. It is recruited early to the divisome by direct interaction with FtsZ, stimulating Z-ring assembly and thereby promoting cell division earlier in the cell cycle. Its recruitment to the Z-ring requires functional FtsA or ZipA. This chain is Cell division protein ZapB, found in Shewanella sp. (strain ANA-3).